A 118-amino-acid polypeptide reads, in one-letter code: DNA-binding protein MmarC5_1518 (118 aa).

A compositionally biased stretch (basic and acidic residues) spans 1-12 (MNPEEIRQRRLQ). Residues 1 to 35 (MNPEEIRQRRLQEMQAKAQEQGAEDPEAQRQAQEQ) are disordered.

This sequence belongs to the PDCD5 family.

In Methanococcus maripaludis (strain C5 / ATCC BAA-1333), this protein is DNA-binding protein MmarC5_1518.